Consider the following 472-residue polypeptide: 3-isopropylmalate dehydratase large subunit (472 aa).

The [4Fe-4S] cluster site is built by Cys353, Cys414, and Cys417.

It belongs to the aconitase/IPM isomerase family. LeuC type 1 subfamily. As to quaternary structure, heterodimer of LeuC and LeuD. It depends on [4Fe-4S] cluster as a cofactor.

The catalysed reaction is (2R,3S)-3-isopropylmalate = (2S)-2-isopropylmalate. The protein operates within amino-acid biosynthesis; L-leucine biosynthesis; L-leucine from 3-methyl-2-oxobutanoate: step 2/4. Functionally, catalyzes the isomerization between 2-isopropylmalate and 3-isopropylmalate, via the formation of 2-isopropylmaleate. The chain is 3-isopropylmalate dehydratase large subunit from Psychrobacter cryohalolentis (strain ATCC BAA-1226 / DSM 17306 / VKM B-2378 / K5).